The sequence spans 762 residues: 5-methyltetrahydropteroyltriglutamate--homocysteine methyltransferase (762 aa).

5-methyltetrahydropteroyltri-L-glutamate-binding positions include 18-21 (REWK) and Lys112. L-homocysteine-binding positions include 435–437 (IGS) and Glu488. L-methionine is bound by residues 435 to 437 (IGS) and Glu488. 5-methyltetrahydropteroyltri-L-glutamate contacts are provided by residues 519–520 (RC) and Trp565. Asp603 contacts L-homocysteine. Residue Asp603 participates in L-methionine binding. Residue Glu609 coordinates 5-methyltetrahydropteroyltri-L-glutamate. Zn(2+) contacts are provided by His645, Cys647, and Glu669. The Proton donor role is filled by His698. Cys719 bears the S-bacillithiol cysteine disulfide mark. Cys730 lines the Zn(2+) pocket.

This sequence belongs to the vitamin-B12 independent methionine synthase family. Zn(2+) serves as cofactor. In response to oxidative stress, Cys-719 can react with bacillithiol (BSH) to form mixed disulfides. S-bacillithiolation leads to loss of catalytic activity and methionine auxotrophy.

It catalyses the reaction 5-methyltetrahydropteroyltri-L-glutamate + L-homocysteine = tetrahydropteroyltri-L-glutamate + L-methionine. It participates in amino-acid biosynthesis; L-methionine biosynthesis via de novo pathway; L-methionine from L-homocysteine (MetE route): step 1/1. In terms of biological role, catalyzes the transfer of a methyl group from 5-methyltetrahydrofolate to homocysteine resulting in methionine formation. This Bacillus subtilis (strain 168) protein is 5-methyltetrahydropteroyltriglutamate--homocysteine methyltransferase.